A 386-amino-acid polypeptide reads, in one-letter code: Chaperone protein DnaJ (386 aa).

One can recognise a J domain in the interval 6-70 (DYYEVLGVDK…QKRAAYDQYG (65 aa)). The segment at 141–223 (GKDTEVSYKR…CHGTGHEKKT (83 aa)) adopts a CR-type zinc-finger fold. Zn(2+) contacts are provided by Cys154, Cys157, Cys171, Cys174, Cys197, Cys200, Cys211, and Cys214. CXXCXGXG motif repeat units lie at residues 154-161 (CHTCGGNG), 171-178 (CHKCKGSG), 197-204 (CDVCHGTG), and 211-218 (CETCHGTG). Positions 363–386 (LTGQSTEEQQSEGFFDKMKDAFKK) are disordered. Positions 364–374 (TGQSTEEQQSE) are enriched in polar residues. Over residues 376-386 (FFDKMKDAFKK) the composition is skewed to basic and acidic residues.

This sequence belongs to the DnaJ family. As to quaternary structure, homodimer. Requires Zn(2+) as cofactor.

The protein localises to the cytoplasm. Participates actively in the response to hyperosmotic and heat shock by preventing the aggregation of stress-denatured proteins and by disaggregating proteins, also in an autonomous, DnaK-independent fashion. Unfolded proteins bind initially to DnaJ; upon interaction with the DnaJ-bound protein, DnaK hydrolyzes its bound ATP, resulting in the formation of a stable complex. GrpE releases ADP from DnaK; ATP binding to DnaK triggers the release of the substrate protein, thus completing the reaction cycle. Several rounds of ATP-dependent interactions between DnaJ, DnaK and GrpE are required for fully efficient folding. Also involved, together with DnaK and GrpE, in the DNA replication of plasmids through activation of initiation proteins. This Tetragenococcus halophilus (Pediococcus halophilus) protein is Chaperone protein DnaJ.